Consider the following 87-residue polypeptide: UPF0250 protein PC1_1177 (87 aa).

The protein belongs to the UPF0250 family.

The polypeptide is UPF0250 protein PC1_1177 (Pectobacterium carotovorum subsp. carotovorum (strain PC1)).